The chain runs to 661 residues: UvrABC system protein C (661 aa).

The GIY-YIG domain occupies 52–130 (HKPGVYRMVD…IKRLHPRFNV (79 aa)). The UVR domain maps to 240–275 (QSIKNDMVQAMHKAAKNFDFEQAAAYRDRLSALSHI).

It belongs to the UvrC family. As to quaternary structure, interacts with UvrB in an incision complex.

It is found in the cytoplasm. The UvrABC repair system catalyzes the recognition and processing of DNA lesions. UvrC both incises the 5' and 3' sides of the lesion. The N-terminal half is responsible for the 3' incision and the C-terminal half is responsible for the 5' incision. The chain is UvrABC system protein C from Bartonella henselae (strain ATCC 49882 / DSM 28221 / CCUG 30454 / Houston 1) (Rochalimaea henselae).